We begin with the raw amino-acid sequence, 399 residues long: Acetylornithine aminotransferase (399 aa).

Pyridoxal 5'-phosphate contacts are provided by residues 102 to 103 (GA) and F138. Residue R141 participates in N(2)-acetyl-L-ornithine binding. Pyridoxal 5'-phosphate is bound at residue 223-226 (DEVQ). The residue at position 252 (K252) is an N6-(pyridoxal phosphate)lysine. Position 280 (T280) interacts with pyridoxal 5'-phosphate.

Belongs to the class-III pyridoxal-phosphate-dependent aminotransferase family. ArgD subfamily. Homodimer. Requires pyridoxal 5'-phosphate as cofactor.

The protein resides in the cytoplasm. It carries out the reaction N(2)-acetyl-L-ornithine + 2-oxoglutarate = N-acetyl-L-glutamate 5-semialdehyde + L-glutamate. It participates in amino-acid biosynthesis; L-arginine biosynthesis; N(2)-acetyl-L-ornithine from L-glutamate: step 4/4. The sequence is that of Acetylornithine aminotransferase from Ralstonia nicotianae (strain ATCC BAA-1114 / GMI1000) (Ralstonia solanacearum).